Here is a 428-residue protein sequence, read N- to C-terminus: Sporulation kinase C (428 aa).

Transmembrane regions (helical) follow at residues 8-28 and 36-56; these read IISIILAMIFIMFWDYLFYFI and PVDIVYTAVTLVSVWMLAYYI. Residues 76 to 147 form the PAS domain; it reads LSEEKNRIMD…NTQIQNKASS (72 aa). The 53-residue stretch at 148 to 200 folds into the PAC domain; sequence GMFTAKYVTKNGTIFWGEVHYKLYYDRDDQFTGSLGTMSDITERKEAEDELIE. The Histidine kinase domain maps to 221–426; that stretch reads GIAHEVRNPL…VFQVVLPLKS (206 aa). Position 224 is a phosphohistidine; by autocatalysis (histidine 224).

In terms of assembly, oligomerizes, probably forms homodimers; oligomerization is assisted by FloT. Interacts with FloT. Another study shows only rare colocalization with FloT or FloA membrane assemblies. KinC membrane assemblies are more mobile than FloT membrane assemblies.

Its subcellular location is the cell membrane. It localises to the membrane raft. It catalyses the reaction ATP + protein L-histidine = ADP + protein N-phospho-L-histidine.. Phosphorylates the sporulation-regulatory protein Spo0A a transcription factor that also controls biofilm formation. Requires FloT and FloA for localization to DRMs and for activity. The sequence is that of Sporulation kinase C from Bacillus subtilis (strain 168).